The chain runs to 236 residues: Small ribosomal subunit protein uS2c (236 aa).

The protein belongs to the universal ribosomal protein uS2 family.

Its subcellular location is the plastid. The protein localises to the chloroplast. The chain is Small ribosomal subunit protein uS2c (rps2) from Lolium perenne (Perennial ryegrass).